Here is a 106-residue protein sequence, read N- to C-terminus: Nucleoid-associated protein Noc_2594 (106 aa).

Disordered stretches follow at residues 1-20 (MKGG…SNME) and 85-106 (QSKE…KLPL). Residues 10–20 (KQAQQLQSNME) are compositionally biased toward polar residues.

The protein belongs to the YbaB/EbfC family. As to quaternary structure, homodimer.

The protein localises to the cytoplasm. It localises to the nucleoid. Binds to DNA and alters its conformation. May be involved in regulation of gene expression, nucleoid organization and DNA protection. The polypeptide is Nucleoid-associated protein Noc_2594 (Nitrosococcus oceani (strain ATCC 19707 / BCRC 17464 / JCM 30415 / NCIMB 11848 / C-107)).